Consider the following 298-residue polypeptide: uncharacterized protein (298 aa).

One can recognise an HTH lysR-type domain in the interval 5 to 62; sequence TSLSAMRIFEAAARLGSFRAAAEELNLSPSAVSHAIMRLERDLGVALFERTTRSVSLT. The H-T-H motif DNA-binding region spans 22-42; that stretch reads FRAAAEELNLSPSAVSHAIMR.

The protein belongs to the LysR transcriptional regulatory family.

This is an uncharacterized protein from Sinorhizobium fredii (strain NBRC 101917 / NGR234).